The following is a 296-amino-acid chain: Protein FAM221A (296 aa).

The tract at residues 235–263 (MQPPSTSSPQPLAVGPSTQISSLRKPEED) is disordered. Over residues 237–256 (PPSTSSPQPLAVGPSTQISS) the composition is skewed to polar residues.

It belongs to the FAM221 family.

The protein is Protein FAM221A (Fam221a) of Rattus norvegicus (Rat).